We begin with the raw amino-acid sequence, 209 residues long: Bacteriorhodopsin (209 aa).

A helical membrane pass occupies residues 1 to 17; the sequence is LWLGTAGMFLGMLYFIA. Topologically, residues 18–31 are cytoplasmic; that stretch reads RGWGETDGRRQKFY. A helical transmembrane segment spans residues 32-50; the sequence is IATILITAIAFVNYLAMAL. At 51-66 the chain is on the extracellular side; sequence GFGLTFIEFGGEQHPI. Residues 67 to 84 traverse the membrane as a helical segment; the sequence is YWARYTDWLFTTPLLLYD. The Cytoplasmic segment spans residues 85-95; sequence LGLLAGADRNT. The chain crosses the membrane as a helical span at residues 96-115; it reads IYSLVSLDVLMIGTGVVATL. The Extracellular portion of the chain corresponds to 116–128; that stretch reads SAGSGVLSAGAER. Residues 129–148 traverse the membrane as a helical segment; that stretch reads LVWWGISTAFLLVLLYFLFS. Residues 149-166 lie on the Cytoplasmic side of the membrane; it reads SLSGRVANLPSDTRSTFK. The helical transmembrane segment at 167-185 threads the bilayer; that stretch reads TLRNLVTVVWLVYPVWWLV. Residues 186–197 lie on the Extracellular side of the membrane; the sequence is GSEGLGLVGIGI. The helical transmembrane segment at 198–209 threads the bilayer; sequence ETAGFMVIDLVA.

The protein belongs to the archaeal/bacterial/fungal opsin family.

It localises to the cell membrane. Its function is as follows. Light-driven proton pump. This chain is Bacteriorhodopsin (bop), found in Halobacterium halobium (strain shark).